We begin with the raw amino-acid sequence, 567 residues long: Probable E3 ubiquitin-protein ligase ARI8 (567 aa).

The interval 1–27 is disordered; that stretch reads MEADDDFYSGTENYSDYADSDEDDADG. The span at 18–27 shows a compositional bias: acidic residues; that stretch reads ADSDEDDADG. The tract at residues 124–337 is TRIAD supradomain; the sequence is GELDCGICFE…GGFYACNRYE (214 aa). 18 residues coordinate Zn(2+): Cys-128, Cys-131, Cys-145, His-147, Cys-150, Cys-153, Cys-173, Cys-178, Cys-217, Cys-222, Cys-239, Cys-241, Cys-246, Cys-249, His-254, Cys-259, Cys-286, and Cys-289. Residues 128-178 form an RING-type 1 zinc finger; sequence CGICFETFLSDKLHAAACGHPFCDSCWEGYITTAINDGPGCLTLRCPDPSC. Residues 197–259 form an IBR-type zinc finger; sequence QKYTSYFVRS…AEEAHRPVDC (63 aa). An RING-type 2; atypical zinc finger spans residues 286–316; it reads CPKCKRPIEKNQGCMHITCTPPCKFEFCWLC. The active site involves Cys-299. Residues Cys-304, Cys-308, Cys-313, Cys-316, His-323, and Cys-333 each contribute to the Zn(2+) site. The tract at residues 514–543 is disordered; that stretch reads DAYDRTSSSKSLGGKTKGSSSKASSSDSSH. Positions 521–542 are enriched in low complexity; that stretch reads SSKSLGGKTKGSSSKASSSDSS. The RanBP2-type zinc finger occupies 540-567; that stretch reads DSSHWPCEYCTYVNPRSTTICQMCEHGR.

This sequence belongs to the RBR family. Ariadne subfamily. Requires Zn(2+) as cofactor. In terms of tissue distribution, ubiquitous.

The enzyme catalyses [E2 ubiquitin-conjugating enzyme]-S-ubiquitinyl-L-cysteine + [acceptor protein]-L-lysine = [E2 ubiquitin-conjugating enzyme]-L-cysteine + [acceptor protein]-N(6)-ubiquitinyl-L-lysine.. It participates in protein modification; protein ubiquitination. Functionally, might act as an E3 ubiquitin-protein ligase, or as part of E3 complex, which accepts ubiquitin from specific E2 ubiquitin-conjugating enzymes and then transfers it to substrates. The protein is Probable E3 ubiquitin-protein ligase ARI8 (ARI8) of Arabidopsis thaliana (Mouse-ear cress).